The chain runs to 317 residues: MSNFAMSALCRVFTRGAPCGLSSCSSVTGLRDFCSGVSRLDRAGSDSMRTASPVNLTYDVFDGKGDSTPLVFLHGLFGSKSNFHSIAKSLVQRTGRKVLTIDARNHGKSPHSPVLTYDTMTSDLTHLLGQLHIGKCVLIGHSMGGKVAMTTALSQPNLVERLVVVDISPSLTSAHTNFHAYIQAMKEVKIPSDIPRSTARRLAEDQLRKIVKERSVRQFLLTNLEEQNGQYGWRINLESISNHLEDILGFPEFDTTYEGPTLFLGGSSSAYISSDDYPEIQRLFPCADIQYIPDASHWIHADKPLDFISSIITFLQP.

The transit peptide at 1-20 (MSNFAMSALCRVFTRGAPCG) directs the protein to the mitochondrion. The AB hydrolase-1 domain maps to 69 to 304 (PLVFLHGLFG…ASHWIHADKP (236 aa)). Active-site charge relay system residues include Ser142, Glu238, and His297.

The protein belongs to the AB hydrolase superfamily. Post-translationally, phosphorylated.

Its subcellular location is the mitochondrion. The protein resides in the mitochondrion matrix. The enzyme catalyses 1-octadecanoyl-2-(5Z,8Z,11Z,14Z-eicosatetraenoyl)-sn-glycerol + H2O = 2-(5Z,8Z,11Z,14Z-eicosatetraenoyl)-glycerol + octadecanoate + H(+). The catalysed reaction is a 1,2-diacyl-sn-glycerol + H2O = a 2-acylglycerol + a fatty acid + H(+). It catalyses the reaction a 1,3-diacyl-sn-glycerol + H2O = a 1-acyl-sn-glycerol + a fatty acid + H(+). It carries out the reaction 1-octadecanoyl-2-(9Z-octadecenoyl)-sn-glycerol + H2O = 2-(9Z-octadecenoyl)-glycerol + octadecanoate + H(+). The enzyme catalyses 1-octadecanoyl-2-(4Z,7Z,10Z,13Z,16Z,19Z-docosahexaenoyl)-sn-glycerol + H2O = 2-(4Z,7Z,10Z,13Z,16Z,19Z-docosahexaenoyl)-glycerol + octadecanoate + H(+). The catalysed reaction is 1,2-didecanoylglycerol + H2O = decanoylglycerol + decanoate + H(+). In terms of biological role, catalyzes the hydrolysis of diacylglycerol in vitro and may function as a key regulator in lipid metabolism, namely by regulating the intracellular levels of diacylglycerol. 1,2-diacyl-sn-glycerols are the preferred substrate over 1,3-diacyl-sn-glycerols. The enzyme hydrolyzes stearate in preference to palmitate from the sn-1 position of 1,2-diacyl-sn-glycerols. This chain is sn-1-specific diacylglycerol lipase ABHD11, found in Danio rerio (Zebrafish).